The chain runs to 78 residues: Probable [Fe-S]-dependent transcriptional repressor (78 aa).

Iron-sulfur cluster-binding residues include Cys-56, Cys-61, Cys-64, and Cys-70.

The protein belongs to the FeoC family.

Functionally, may function as a transcriptional regulator that controls feoABC expression. The sequence is that of Probable [Fe-S]-dependent transcriptional repressor from Escherichia coli O127:H6 (strain E2348/69 / EPEC).